Reading from the N-terminus, the 203-residue chain is SCO2-like protein RT0576 (203 aa).

A Thioredoxin domain is found at 42–203 (KDNIKIGEAF…KEIMEFLRNE (162 aa)). Cu cation contacts are provided by Cys-80, Cys-84, and His-170.

The protein belongs to the SCO1/2 family.

The sequence is that of SCO2-like protein RT0576 from Rickettsia typhi (strain ATCC VR-144 / Wilmington).